A 562-amino-acid polypeptide reads, in one-letter code: Arylsulfatase H (562 aa).

Ca(2+) contacts are provided by D15, D16, and C55. C55 acts as the Nucleophile in catalysis. At C55 the chain carries 3-oxoalanine (Cys). Residue K115 coordinates substrate. H117 is an active-site residue. 2 helical membrane passes run 167-187 (LWIS…PKFA) and 189-209 (WFSV…LFFT). H271 provides a ligand contact to substrate. Ca(2+)-binding residues include D323 and N324. K348 is a substrate binding site.

Belongs to the sulfatase family. Ca(2+) is required as a cofactor. In terms of processing, the conversion to 3-oxoalanine (also known as C-formylglycine, FGly), of a serine or cysteine residue in prokaryotes and of a cysteine residue in eukaryotes, is critical for catalytic activity.

It localises to the membrane. This Homo sapiens (Human) protein is Arylsulfatase H (ARSH).